The chain runs to 180 residues: ATP-dependent protease subunit HslV (180 aa).

Thr-6 is a catalytic residue. Positions 164, 167, and 170 each coordinate Na(+).

This sequence belongs to the peptidase T1B family. HslV subfamily. A double ring-shaped homohexamer of HslV is capped on each side by a ring-shaped HslU homohexamer. The assembly of the HslU/HslV complex is dependent on binding of ATP.

The protein localises to the cytoplasm. The enzyme catalyses ATP-dependent cleavage of peptide bonds with broad specificity.. Its activity is regulated as follows. Allosterically activated by HslU binding. Functionally, protease subunit of a proteasome-like degradation complex believed to be a general protein degrading machinery. This Borrelia hermsii (strain HS1 / DAH) protein is ATP-dependent protease subunit HslV.